The sequence spans 438 residues: Coenzyme A disulfide reductase (438 aa).

8-33 (GAVAGGATCASQIRRLDKESDIIIFE) serves as a coordination point for FAD. 5 residues coordinate substrate: T15, Q19, R22, S39, and N42. The active-site Nucleophile is the C43. C43 (redox-active) is an active-site residue. Residue K71 participates in substrate binding. Residue 151 to 166 (VLVVGAGYVSLEVLEN) participates in NADP(+) binding. 267–277 (TNVPNIYVIGD) provides a ligand contact to FAD. H299 contributes to the substrate binding site. Position 419 (Y419) interacts with FAD. Substrate is bound at residue K427.

The protein belongs to the class-III pyridine nucleotide-disulfide oxidoreductase family. In terms of assembly, homodimer. The cofactor is FAD.

The catalysed reaction is NADP(+) + 2 CoA = CoA-disulfide + NADPH + H(+). In terms of biological role, catalyzes specifically the NADPH-dependent reduction of coenzyme A disulfide. This is Coenzyme A disulfide reductase from Staphylococcus aureus (strain MRSA252).